Here is an 89-residue protein sequence, read N- to C-terminus: MPIDTATKQKIIAEYATKEGDTGSPEVQVALLTHRINQLTEHLKEHKHDHHSRRGLLLLVGRRRRLLQYVAKKDINRYRRLIERLGLRR.

This sequence belongs to the universal ribosomal protein uS15 family. Part of the 30S ribosomal subunit. Forms a bridge to the 50S subunit in the 70S ribosome, contacting the 23S rRNA.

One of the primary rRNA binding proteins, it binds directly to 16S rRNA where it helps nucleate assembly of the platform of the 30S subunit by binding and bridging several RNA helices of the 16S rRNA. Functionally, forms an intersubunit bridge (bridge B4) with the 23S rRNA of the 50S subunit in the ribosome. This chain is Small ribosomal subunit protein uS15, found in Thermobifida fusca (strain YX).